Reading from the N-terminus, the 452-residue chain is Sodium-coupled neutral amino acid transporter 7 (452 aa).

A run of 11 helical transmembrane segments spans residues Ala-46–Phe-66, Ala-74–Ala-94, Leu-120–Ile-140, Phe-168–Ser-188, Phe-195–Pro-215, Val-234–Gly-256, Ile-272–Phe-292, Ile-309–Leu-329, Val-361–Ile-381, Ile-385–Ile-405, and Ser-419–Gly-439.

Belongs to the amino acid/polyamine transporter 2 family.

Its subcellular location is the lysosome membrane. It is found in the cell projection. The protein localises to the axon. It catalyses the reaction L-asparagine(in) + Na(+)(in) = L-asparagine(out) + Na(+)(out). The enzyme catalyses L-glutamine(in) + Na(+)(in) = L-glutamine(out) + Na(+)(out). Functionally, symporter that selectively cotransports sodium ions and amino acids, such as L-glutamine and L-asparagine from the lysosome into the cytoplasm and may participates in mTORC1 activation. The transport activity requires an acidic lysosomal lumen. The protein is Sodium-coupled neutral amino acid transporter 7 of Xenopus laevis (African clawed frog).